Here is a 361-residue protein sequence, read N- to C-terminus: dTDP-glucose 4,6-dehydratase (361 aa).

Residues 11–12, 32–35, 58–59, 80–84, and Thr99 contribute to the NAD(+) site; these read FI, DKLT, DI, and LAAES. Ser84 serves as a coordination point for substrate. Thr133 contributes to the substrate binding site. The Proton donor role is filled by Asp134. Catalysis depends on proton acceptor residues Glu135 and Tyr167. NAD(+) is bound at residue 167 to 171; the sequence is YSASK. Asn196 is a binding site for substrate. An NAD(+)-binding site is contributed by Asn197. Residues 206 to 207, 222 to 224, Arg231, Asn266, and 296 to 300 each bind substrate; these read KL, PIY, and DRPGH.

Belongs to the NAD(P)-dependent epimerase/dehydratase family. dTDP-glucose dehydratase subfamily. As to quaternary structure, homodimer. Requires NAD(+) as cofactor.

It catalyses the reaction dTDP-alpha-D-glucose = dTDP-4-dehydro-6-deoxy-alpha-D-glucose + H2O. It functions in the pathway carbohydrate biosynthesis; dTDP-L-rhamnose biosynthesis. It participates in bacterial outer membrane biogenesis; LPS O-antigen biosynthesis. Catalyzes the dehydration of dTDP-D-glucose to form dTDP-6-deoxy-D-xylo-4-hexulose via a three-step process involving oxidation, dehydration and reduction. The sequence is that of dTDP-glucose 4,6-dehydratase (rfbB) from Escherichia coli.